Here is a 118-residue protein sequence, read N- to C-terminus: Altered inheritance of mitochondria protein 26, mitochondrial (118 aa).

3 helical membrane-spanning segments follow: residues 7-27, 41-61, and 98-118; these read EHLL…AYFF, LAVT…SIPA, and FLFC…GLSI.

It is found in the mitochondrion membrane. Involved in selective mitochondria autophagy (mitophagy). This Saccharomyces cerevisiae (strain ATCC 204508 / S288c) (Baker's yeast) protein is Altered inheritance of mitochondria protein 26, mitochondrial (AIM26).